Consider the following 29-residue polypeptide: Scolopendra 8011.73 Da toxin (29 aa).

Expressed by the venom gland.

It localises to the secreted. This chain is Scolopendra 8011.73 Da toxin, found in Scolopendra viridicornis nigra (Brazilian giant centipede).